A 280-amino-acid polypeptide reads, in one-letter code: Band 7 protein AGAP004871 (280 aa).

Residues 23-43 (ILIFLSWVLVVLTMPFSLLVC) traverse the membrane as a helical segment.

Belongs to the band 7/mec-2 family.

It localises to the membrane. This is Band 7 protein AGAP004871 from Anopheles gambiae (African malaria mosquito).